A 146-amino-acid chain; its full sequence is 3-dehydroquinate dehydratase (146 aa).

Tyrosine 22 (proton acceptor) is an active-site residue. Substrate-binding residues include asparagine 73, histidine 79, and aspartate 86. Histidine 99 acts as the Proton donor in catalysis. Substrate is bound by residues 100–101 (LS) and arginine 110.

The protein belongs to the type-II 3-dehydroquinase family. Homododecamer.

The catalysed reaction is 3-dehydroquinate = 3-dehydroshikimate + H2O. It participates in metabolic intermediate biosynthesis; chorismate biosynthesis; chorismate from D-erythrose 4-phosphate and phosphoenolpyruvate: step 3/7. Catalyzes a trans-dehydration via an enolate intermediate. This Parasynechococcus marenigrum (strain WH8102) protein is 3-dehydroquinate dehydratase.